Consider the following 154-residue polypeptide: Endoribonuclease YbeY (154 aa).

Zn(2+) contacts are provided by His-114, His-118, and His-124.

The protein belongs to the endoribonuclease YbeY family. Requires Zn(2+) as cofactor.

It is found in the cytoplasm. Single strand-specific metallo-endoribonuclease involved in late-stage 70S ribosome quality control and in maturation of the 3' terminus of the 16S rRNA. The protein is Endoribonuclease YbeY of Histophilus somni (strain 2336) (Haemophilus somnus).